The primary structure comprises 188 residues: UPF0200 protein YG5714_1176 (188 aa).

Residue 15 to 22 (GMPGSGKS) participates in ATP binding.

It belongs to the UPF0200 family.

In Saccharolobus islandicus (strain Y.G.57.14 / Yellowstone #1) (Sulfolobus islandicus), this protein is UPF0200 protein YG5714_1176.